A 155-amino-acid chain; its full sequence is 6,7-dimethyl-8-ribityllumazine synthase (155 aa).

5-amino-6-(D-ribitylamino)uracil-binding positions include phenylalanine 22, alanine 57–glutamate 59, and threonine 81–isoleucine 83. A (2S)-2-hydroxy-3-oxobutyl phosphate-binding site is contributed by glycine 86–threonine 87. Catalysis depends on histidine 89, which acts as the Proton donor. Phenylalanine 114 contributes to the 5-amino-6-(D-ribitylamino)uracil binding site. Arginine 128 lines the (2S)-2-hydroxy-3-oxobutyl phosphate pocket.

Belongs to the DMRL synthase family. As to quaternary structure, forms an icosahedral capsid composed of 60 subunits, arranged as a dodecamer of pentamers.

It carries out the reaction (2S)-2-hydroxy-3-oxobutyl phosphate + 5-amino-6-(D-ribitylamino)uracil = 6,7-dimethyl-8-(1-D-ribityl)lumazine + phosphate + 2 H2O + H(+). It participates in cofactor biosynthesis; riboflavin biosynthesis; riboflavin from 2-hydroxy-3-oxobutyl phosphate and 5-amino-6-(D-ribitylamino)uracil: step 1/2. Catalyzes the formation of 6,7-dimethyl-8-ribityllumazine by condensation of 5-amino-6-(D-ribitylamino)uracil with 3,4-dihydroxy-2-butanone 4-phosphate. This is the penultimate step in the biosynthesis of riboflavin. The sequence is that of 6,7-dimethyl-8-ribityllumazine synthase from Psychromonas ingrahamii (strain DSM 17664 / CCUG 51855 / 37).